Consider the following 201-residue polypeptide: dITP/XTP pyrophosphatase (201 aa).

Residue 9–14 (TRNSGK) coordinates substrate. Mg(2+) is bound by residues Glu42 and Asp71. The active-site Proton acceptor is the Asp71. Substrate contacts are provided by residues Ser72, 156 to 159 (FGYD), Lys178, and 183 to 184 (HR).

Belongs to the HAM1 NTPase family. As to quaternary structure, homodimer. It depends on Mg(2+) as a cofactor.

It catalyses the reaction XTP + H2O = XMP + diphosphate + H(+). The enzyme catalyses dITP + H2O = dIMP + diphosphate + H(+). The catalysed reaction is ITP + H2O = IMP + diphosphate + H(+). Pyrophosphatase that catalyzes the hydrolysis of nucleoside triphosphates to their monophosphate derivatives, with a high preference for the non-canonical purine nucleotides XTP (xanthosine triphosphate), dITP (deoxyinosine triphosphate) and ITP. Seems to function as a house-cleaning enzyme that removes non-canonical purine nucleotides from the nucleotide pool, thus preventing their incorporation into DNA/RNA and avoiding chromosomal lesions. The polypeptide is dITP/XTP pyrophosphatase (ynbD) (Lactococcus lactis subsp. lactis (strain IL1403) (Streptococcus lactis)).